We begin with the raw amino-acid sequence, 518 residues long: Xylose import ATP-binding protein XylG (518 aa).

2 consecutive ABC transporter domains span residues 6-245 (LQMN…VGRE) and 262-507 (FEAR…LSQP). 38–45 (GENGAGKS) serves as a coordination point for ATP.

The protein belongs to the ABC transporter superfamily. Xylose importer (TC 3.A.1.2.4) family. As to quaternary structure, the complex is composed of two ATP-binding proteins (XylG), two transmembrane proteins (XylH) and a solute-binding protein (XylF).

The protein resides in the cell inner membrane. It carries out the reaction D-xylose(out) + ATP + H2O = D-xylose(in) + ADP + phosphate + H(+). Part of the ABC transporter complex XylFGH involved in xylose import. Responsible for energy coupling to the transport system. The polypeptide is Xylose import ATP-binding protein XylG (Pseudomonas fluorescens (strain Pf0-1)).